A 255-amino-acid polypeptide reads, in one-letter code: Putative cysteine-rich repeat secretory protein 10 (255 aa).

The N-terminal stretch at 1–26 (MFSSSVSISILVVVAMQFSFIHNVLS) is a signal peptide. Gnk2-homologous domains follow at residues 33 to 134 (YLQH…EIYT) and 140 to 252 (FKHY…LYPF).

Belongs to the cysteine-rich repeat secretory protein family.

It is found in the secreted. This chain is Putative cysteine-rich repeat secretory protein 10 (CRRSP10), found in Arabidopsis thaliana (Mouse-ear cress).